Here is a 245-residue protein sequence, read N- to C-terminus: Galectin-3 (245 aa).

The interval 1–30 (MADGFSLNDALAGSGNPNPQGWPGAWGNQP) is disordered. Ala2 carries the post-translational modification N-acetylalanine. Ser6 is subject to Phosphoserine; by CK1. 4 repeat units span residues 35 to 43 (YPGASYPGA), 44 to 52 (YPGQAPPGA), 53 to 61 (YPGQAPPGA), and 62 to 70 (YPGPTAPGA). The segment at 35-99 (YPGASYPGAY…PSAPGAYPAA (65 aa)) is 7 X 9 AA tandem repeats of Y-P-G-X(3)-P-[GS]-A. The segment at 47–68 (QAPPGAYPGQAPPGAYPGPTAP) is disordered. The stretch at 71-78 (YPGPAPGA) is one 5; approximate repeat. Residues 79-88 (YPGQPGASGA) form a 6; approximate repeat. Residues 89–99 (YPSAPGAYPAA) form a 7; approximate repeat. The 131-residue stretch at 113-243 (YKLPLAGGVM…DITLTSAAPT (131 aa)) folds into the Galectin domain. 176–182 (WGREERQ) is an a beta-D-galactoside binding site. Ser183 is modified (phosphoserine). A Nuclear export signal motif is present at residues 221 to 236 (KNLREINQMEISGDIT).

In terms of assembly, probably forms homo- or heterodimers. Interacts with DMBT1. Interacts with CD6 and ALCAM. Forms a complex with the ITGA3, ITGB1 and CSPG4. Interacts with LGALS3BP, LYPD3, ZFTRAF1 and UACA. Interacts with TRIM16; this interaction mediates autophagy of damage endomembranes. Interacts with cargo receptor TMED10; the interaction mediates the translocation from the cytoplasm into the ERGIC (endoplasmic reticulum-Golgi intermediate compartment) and thereby secretion. Interacts with and inhibits by binding NCR3/NKp30.

The protein localises to the cytoplasm. The protein resides in the nucleus. It is found in the secreted. Its function is as follows. Galactose-specific lectin which binds IgE. May mediate with the alpha-3, beta-1 integrin the stimulation by CSPG4 of endothelial cells migration. Together with DMBT1, required for terminal differentiation of columnar epithelial cells during early embryogenesis. In the nucleus: acts as a pre-mRNA splicing factor. Involved in acute inflammatory responses including neutrophil activation and adhesion, chemoattraction of monocytes macrophages, opsonization of apoptotic neutrophils, and activation of mast cells. Together with TRIM16, coordinates the recognition of membrane damage with mobilization of the core autophagy regulators ATG16L1 and BECN1 in response to damaged endomembranes. When secreted, interacts with NK cell-activating receptor NCR3/NKp30 acting as an inhibitory ligand which antagonizes NK cell attack. The chain is Galectin-3 (LGALS3) from Cricetulus longicaudatus (Long-tailed dwarf hamster).